Consider the following 402-residue polypeptide: Myb-related protein 1 (402 aa).

The region spanning 42-102 (TDAKPRLKWT…HLQKYRLSKN (61 aa)) is the HTH myb-type domain. Positions 73-98 (PKTIMKVMGIPGLTLYHLKSHLQKYR) form a DNA-binding region, H-T-H motif. Residues 148–168 (SDALQMQIEVQRRLHEQLEVQ) are a coiled coil. An LHEQLE motif is present at residues 161-166 (LHEQLE). Over residues 238 to 260 (QQMQKTYPPNSSLDSCLTSSEGT) the composition is skewed to polar residues. 3 disordered regions span residues 238-266 (QQMQ…APKM), 344-363 (EHRG…FNEN), and 382-402 (HDEN…FSWN).

It belongs to the MYB-CC family. Isoforms 1 and 2: homodimer. Isoform 3: loss of dimerization. Expressed in phloem and/or cambium.

The protein localises to the nucleus. Its function is as follows. Transcription factor that may act on the GAL1 promoter. Acts redundantly with MYR2 as a repressor of flowering and organ elongation under decreased light intensity. Represses gibberellic acid (GA)-dependent responses and affects levels of bioactive GA. The protein is Myb-related protein 1 of Arabidopsis thaliana (Mouse-ear cress).